Consider the following 117-residue polypeptide: Antimicrobial peptide AmAMP1 (117 aa).

The signal sequence occupies residues 1–25 (MPSIRVLFVLLAVILLFMEVKMTSA). The propeptide occupies 26-73 (ASIVKDVDEDETLENEDGEAMENSWPWHGVEDTSDYSDLSDLANSEKR). Cystine bridges form between Cys76/Cys115, Cys85/Cys108, and Cys94/Cys112.

Belongs to the coral AMP family.

It localises to the secreted. Its function is as follows. Coral peptide that probably acts as an antimicrobial peptide in the surface mucous layer of planula larvae and likely also in adults. Shows moderate to high activity against some Gram-negative and Gram-positive bacteria (tested on E.coli, B.megaterium, S.aureus, E.aesturaii, B.algicola, Acinetobacter spec.). Does not show antibacterial activity against the coral pathogen V.coralliilyticus. In Acropora millepora (Staghorn coral), this protein is Antimicrobial peptide AmAMP1.